A 210-amino-acid polypeptide reads, in one-letter code: Phosphate propanoyltransferase (210 aa).

Residue 26-28 (ISN) participates in CoA binding. Residues H30 and H32 each contribute to the Zn(2+) site. Residues K71 and R78 each contribute to the CoA site. A phosphate-binding site is contributed by R84. Zn(2+) contacts are provided by E90, H138, H140, and H186. Position 193 (N193) interacts with CoA.

The protein belongs to the PduL family. Zn(2+) is required as a cofactor.

It is found in the bacterial microcompartment. The catalysed reaction is propanoyl-CoA + phosphate = propanoyl phosphate + CoA. It participates in polyol metabolism; 1,2-propanediol degradation. Involved in 1,2-propanediol (1,2-PD) utilization within the bacterial microcompartment (BMC) dedicated to 1,2-PD degradation by catalyzing the conversion of propanoyl-CoA to propanoyl-phosphate. Required for optimal growth on 1,2-PD. CoA is regenerated within the BMC (for use by PduP) via this enzyme, although there must also be cofactor transport across the BMC. Directly targeted to the BMC. Its function is as follows. Expression of a cosmid containing the full 21-gene pdu operon in E.coli allows E.coli to grow on 1,2-propanediol (1,2-PD) with the appearance of bacterial microcompartments (BMC) in its cytoplasm. In terms of biological role, the 1,2-PD-specific bacterial microcompartment (BMC) concentrates low levels of 1,2-PD catabolic enzymes, concentrates volatile reaction intermediates thus enhancing pathway flux and keeps the level of toxic, mutagenic propionaldehyde low. This is Phosphate propanoyltransferase from Citrobacter freundii.